A 398-amino-acid polypeptide reads, in one-letter code: Elongation factor Tu (398 aa).

In terms of domain architecture, tr-type G spans 10-207 (KPHVNIGTIG…TVDDYIPDPE (198 aa)). The G1 stretch occupies residues 19 to 26 (GHVDHGKT). Position 19-26 (19-26 (GHVDHGKT)) interacts with GTP. Thr-26 contributes to the Mg(2+) binding site. Residues 63–67 (GITIN) are G2. Residues 84–87 (DAPG) form a G3 region. Residues 84–88 (DAPGH) and 139–142 (NKVD) each bind GTP. The tract at residues 139 to 142 (NKVD) is G4. Positions 177 to 179 (SAL) are G5.

Belongs to the TRAFAC class translation factor GTPase superfamily. Classic translation factor GTPase family. EF-Tu/EF-1A subfamily. In terms of assembly, monomer.

Its subcellular location is the cytoplasm. It carries out the reaction GTP + H2O = GDP + phosphate + H(+). Functionally, GTP hydrolase that promotes the GTP-dependent binding of aminoacyl-tRNA to the A-site of ribosomes during protein biosynthesis. This Streptococcus mutans serotype c (strain ATCC 700610 / UA159) protein is Elongation factor Tu.